Reading from the N-terminus, the 344-residue chain is Protein MENT (344 aa).

An N-terminal signal peptide occupies residues 1-22 (MVPAACMLLWALLLSLESRAAG). The span at 162–182 (DMRSPSSKTTVDLSSETTLQQ) shows a compositional bias: polar residues. Positions 162–197 (DMRSPSSKTTVDLSSETTLQQWSTPGSTPSPWPKPS) are disordered.

In terms of processing, phosphorylation sites are present in the extracellular medium.

It localises to the secreted. Functionally, involved in control of cellular proliferation. Onconcogenic modifier contributing to the tumor suppressor function of DNMT3B. The polypeptide is Protein MENT (Ment) (Rattus norvegicus (Rat)).